We begin with the raw amino-acid sequence, 351 residues long: 3-dehydroquinate synthase (351 aa).

NAD(+) is bound by residues 60-65 (DGEEYK), 94-98 (GVISD), 118-119 (TT), lysine 131, lysine 140, and 158-161 (FLKT). 3 residues coordinate Zn(2+): glutamate 173, histidine 239, and histidine 256.

It belongs to the sugar phosphate cyclases superfamily. Dehydroquinate synthase family. Requires Co(2+) as cofactor. Zn(2+) is required as a cofactor. It depends on NAD(+) as a cofactor.

It is found in the cytoplasm. The catalysed reaction is 7-phospho-2-dehydro-3-deoxy-D-arabino-heptonate = 3-dehydroquinate + phosphate. The protein operates within metabolic intermediate biosynthesis; chorismate biosynthesis; chorismate from D-erythrose 4-phosphate and phosphoenolpyruvate: step 2/7. Functionally, catalyzes the conversion of 3-deoxy-D-arabino-heptulosonate 7-phosphate (DAHP) to dehydroquinate (DHQ). In Campylobacter jejuni subsp. jejuni serotype O:23/36 (strain 81-176), this protein is 3-dehydroquinate synthase.